The sequence spans 280 residues: Phosphatidylglycerol--prolipoprotein diacylglyceryl transferase (280 aa).

4 helical membrane passes run 30–50, 71–91, 106–126, and 132–152; these read WYGLAYVVGILLGWFYARRIV, FLLWAAGGIVLGGRIGYILFY, IWNGGMSFHGGLVGTTLAMII, and AIPIWSLFDVVAAVVPIGLFF. Arg154 is an a 1,2-diacyl-sn-glycero-3-phospho-(1'-sn-glycerol) binding site. The next 3 membrane-spanning stretches (helical) occupy residues 188 to 208, 217 to 237, and 251 to 271; these read QLYEAALEGLVLLAVLAWFVY, GLVTGIFVCGYAASRIFVEFF, and WLTMGMVLSVPMALIGIWAIA.

Belongs to the Lgt family.

It localises to the cell inner membrane. It catalyses the reaction L-cysteinyl-[prolipoprotein] + a 1,2-diacyl-sn-glycero-3-phospho-(1'-sn-glycerol) = an S-1,2-diacyl-sn-glyceryl-L-cysteinyl-[prolipoprotein] + sn-glycerol 1-phosphate + H(+). Its pathway is protein modification; lipoprotein biosynthesis (diacylglyceryl transfer). Its function is as follows. Catalyzes the transfer of the diacylglyceryl group from phosphatidylglycerol to the sulfhydryl group of the N-terminal cysteine of a prolipoprotein, the first step in the formation of mature lipoproteins. The chain is Phosphatidylglycerol--prolipoprotein diacylglyceryl transferase from Sinorhizobium medicae (strain WSM419) (Ensifer medicae).